The primary structure comprises 399 residues: Acetylornithine aminotransferase (399 aa).

Pyridoxal 5'-phosphate is bound by residues 102-103 (GA) and F138. Residue R141 coordinates N(2)-acetyl-L-ornithine. 223-226 (DEVQ) serves as a coordination point for pyridoxal 5'-phosphate. Residue K252 is modified to N6-(pyridoxal phosphate)lysine. T280 serves as a coordination point for pyridoxal 5'-phosphate.

Belongs to the class-III pyridoxal-phosphate-dependent aminotransferase family. ArgD subfamily. As to quaternary structure, homodimer. Pyridoxal 5'-phosphate is required as a cofactor.

The protein localises to the cytoplasm. The enzyme catalyses N(2)-acetyl-L-ornithine + 2-oxoglutarate = N-acetyl-L-glutamate 5-semialdehyde + L-glutamate. The protein operates within amino-acid biosynthesis; L-arginine biosynthesis; N(2)-acetyl-L-ornithine from L-glutamate: step 4/4. This Ralstonia nicotianae (strain ATCC BAA-1114 / GMI1000) (Ralstonia solanacearum) protein is Acetylornithine aminotransferase.